Here is a 201-residue protein sequence, read N- to C-terminus: Small ribosomal subunit protein uS4c (201 aa).

The S4 RNA-binding domain occupies 89–152; the sequence is MRLDNILFRL…NSRTLVQNLL (64 aa).

Belongs to the universal ribosomal protein uS4 family. In terms of assembly, part of the 30S ribosomal subunit. Contacts protein S5. The interaction surface between S4 and S5 is involved in control of translational fidelity.

It localises to the plastid. The protein resides in the chloroplast. Functionally, one of the primary rRNA binding proteins, it binds directly to 16S rRNA where it nucleates assembly of the body of the 30S subunit. In terms of biological role, with S5 and S12 plays an important role in translational accuracy. This chain is Small ribosomal subunit protein uS4c (rps4), found in Arabidopsis thaliana (Mouse-ear cress).